The primary structure comprises 674 residues: Pre-mRNA-splicing factor cwf4 (674 aa).

16 HAT repeats span residues 50–82, 84–116, 118–150, 152–183, 185–216, 218–253, 255–289, 299–331, 333–367, 377–413, 415–446, 448–480, 482–516, 518–549, 567–608, and 610–643; these read EFQG…WELD, KEFA…CEMK, RNIN…MEEM, GNIT…MERR, HENE…FEEE, GNAA…FEIR, KEYE…FEKQ, TVLD…LEES, GDIN…IWLN, KDVD…FELR, RKID…FEDA, KQFD…LETK, GDSD…FEFE, MEYG…FEIA, TAVV…MHGT, and DTRK…YLFP.

Belongs to the crooked-neck family. Belongs to the 40S cdc5-associated complex (or cwf complex), a spliceosome sub-complex reminiscent of a late-stage spliceosome composed of the U2, U5 and U6 snRNAs and at least brr2, cdc5, cwf2/prp3, cwf3/syf1, cwf4/syf3, cwf5/ecm2, spp42/cwf6, cwf7/spf27, cwf8, cwf9, cwf10, cwf11, cwf12, prp45/cwf13, cwf14, cwf15, cwf16, cwf17, cwf18, cwf19, cwf20, cwf21, cwf22, cwf23, cwf24, cwf25, cwf26, cyp7/cwf27, cwf28, cwf29/ist3, lea1, msl1, prp5/cwf1, prp10, prp12/sap130, prp17, prp22, sap61, sap62, sap114, sap145, slu7, smb1, smd1, smd3, smf1, smg1 and syf2.

Its subcellular location is the nucleus. Involved in pre-mRNA splicing and cell cycle progression. Required for the spliceosome assembly and initiation of the DNA replication. The protein is Pre-mRNA-splicing factor cwf4 (cwf4) of Schizosaccharomyces pombe (strain 972 / ATCC 24843) (Fission yeast).